The chain runs to 499 residues: Potassium voltage-gated channel subfamily A member 2 (499 aa).

A disordered region spans residues 1 to 27 (MTVATGDLTDGSVGFAGHPQDSYDPEP). The tetramerization domain stretch occupies residues 1–125 (MTVATGDLTD…YELGEEAMEI (125 aa)). Topologically, residues 1–160 (MTVATGDLTD…LLFEYPESSG (160 aa)) are cytoplasmic. A helical transmembrane segment spans residues 161-182 (PARIIAIISVTVILISIVSFCL). The Extracellular segment spans residues 183–221 (ETLPVFRDENEDMHGSGGNYYSYPNSTVRFQKSNTFTDP). Residue Asn207 is glycosylated (N-linked (GlcNAc...) asparagine). Residues 222-243 (FFIVETLCIIWFSFEFLVRFLA) form a helical membrane-spanning segment. A lipid anchor (S-palmitoyl cysteine) is attached at Cys244. Residues 244–254 (CPSKAVFFTNL) lie on the Cytoplasmic side of the membrane. The chain crosses the membrane as a helical span at residues 255–275 (MNIIDIVAIIPYFITLGTELA). At 276–289 (EKTEDGQQGQQAMS) the chain is on the extracellular side. Residues 290–310 (LAILRVIRLVRVFRIFKLSRH) traverse the membrane as a helical; Voltage-sensor segment. Over 311 to 325 (SKGLQILGQTLNASM) the chain is Cytoplasmic. Residues 312–325 (KGLQILGQTLNASM) form an S4-S5 linker region. The helical transmembrane segment at 326–347 (RELGLLIFFLFIGVILFSSAVF) threads the bilayer. Topologically, residues 348 to 361 (FAEADERDSQFPSI) are extracellular. An intramembrane region (helical) is located at residues 362-373 (PDAFWWAVVSMT). The short motif at 374–379 (TVGYGD) is the Selectivity filter element. An intramembrane segment occupies 374 to 381 (TVGYGDMV). Residues 382–388 (PTTIGGK) are Extracellular-facing. Residues 389-417 (IVGSLCAIAGVLTIALPVPVIVSNFNYFY) form a helical membrane-spanning segment. Topologically, residues 418-499 (HRETEGEEQA…VNITKMLTDV (82 aa)) are cytoplasmic. A PDZ-binding motif is present at residues 497–499 (TDV).

This sequence belongs to the potassium channel family. A (Shaker) (TC 1.A.1.2) subfamily. Kv1.2/KCNA2 sub-subfamily. Homotetramer and heterotetramer with other family members. Detected in tadpole brain and spinal cord.

Its subcellular location is the cell membrane. It catalyses the reaction K(+)(in) = K(+)(out). Its function is as follows. Voltage-gated potassium channel that mediates transmembrane potassium transport in excitable membranes, primarily in the brain and central nervous system. Prevents aberrant action potential firing and regulates neuronal output. Forms tetrameric potassium-selective channels through which potassium ions pass in accordance with their electrochemical gradient. The channel alternates between opened and closed conformations in response to the voltage difference across the membrane. Can form functional homotetrameric channels and heterotetrameric channels with other family members; the channels characteristics depend critically on the types of channel-forming alpha subunits that are present. Channel properties are modulated by cytoplasmic beta subunits that regulate the subcellular location of the alpha subunits. In vivo, membranes probably contain a mixture of heteromeric potassium channel complexes, making it difficult to assign currents observed in intact tissues to any particular potassium channel family member. Homotetrameric KCNA2 forms a delayed-rectifier potassium channel that opens in response to membrane depolarization, followed by slow spontaneous channel closure. Regulates neuronal excitability and plays a role as pacemaker in the regulation of neuronal action potentials. KCNA2-containing channels play a presynaptic role and prevent hyperexcitability and aberrant action potential firing. Response to toxins that are selective for KCNA2-containing potassium channels suggests that in Purkinje cells, dendritic subthreshold KCNA2-containing potassium channels prevent random spontaneous calcium spikes, suppressing dendritic hyperexcitability without hindering the generation of somatic action potentials, and thereby play an important role in motor coordination. Plays a role in the induction of long-term potentiation of neuron excitability in the CA3 layer of the hippocampus. The protein is Potassium voltage-gated channel subfamily A member 2 (kcna2) of Xenopus laevis (African clawed frog).